The sequence spans 481 residues: UDP-glycosyltransferase 88F4 (481 aa).

Residues S288, 357–358, 375–383, and 397–400 each bind UDP-alpha-D-glucose; these read WA, HCGWNSVLE, and YAEQ.

The protein belongs to the UDP-glycosyltransferase family.

Glycosyltransferase that may possess chalcone and dihydrochalcone 2'-O-glucosyltransferase activity. In Malus domestica (Apple), this protein is UDP-glycosyltransferase 88F4.